The primary structure comprises 364 residues: Homeobox protein Nkx-2.3 (364 aa).

The segment at 132–153 (GDCKAAEESERPKPRSRRKPRV) is disordered. Positions 135-144 (KAAEESERPK) are enriched in basic and acidic residues. Positions 148–207 (RRKPRVLFSQAQVFELERRFKQQRYLSAPEREHLASSLKLTSTQVKIWFQNRRYKCKRQR) form a DNA-binding region, homeobox.

Belongs to the NK-2 homeobox family.

The protein localises to the nucleus. Its function is as follows. Transcription factor. The chain is Homeobox protein Nkx-2.3 (NKX2-3) from Homo sapiens (Human).